The sequence spans 483 residues: UDP-N-acetylmuramate--L-alanine ligase (483 aa).

Position 122-128 (122-128 (GSHGKTT)) interacts with ATP.

This sequence belongs to the MurCDEF family.

The protein localises to the cytoplasm. It catalyses the reaction UDP-N-acetyl-alpha-D-muramate + L-alanine + ATP = UDP-N-acetyl-alpha-D-muramoyl-L-alanine + ADP + phosphate + H(+). Its pathway is cell wall biogenesis; peptidoglycan biosynthesis. Cell wall formation. The protein is UDP-N-acetylmuramate--L-alanine ligase of Synechococcus sp. (strain CC9311).